We begin with the raw amino-acid sequence, 58 residues long: DNA-binding protein (58 aa).

2 stretches are compositionally biased toward basic residues: residues 1–19 (MVRR…RSRS) and 28–58 (SRYR…NQYI). Positions 1–58 (MVRRRRSRSPYRRRSRSRSRSGSDRSRSRYRSRSRSRSRSRSRARSRSPYHHHINQYI) are disordered.

Probably phosphorylated in infected cells.

The protein resides in the virion. Its function is as follows. Thought to be responsible for DNA condensation during packaging of the nucleocapsids. The polypeptide is DNA-binding protein (P7.3) (Cryptophlebia leucotreta granulosis virus (ClGV)).